The sequence spans 861 residues: MDASKYVRYTPEQVEALERLYYECPKPSSLRRQQLVRECPALANVDPKQIKVWFQNRRCREKQRKESSRLQALNRKLTAMNKLLMEENDRLQKQVSQLVYDHGRHGVAAAGMMRRVPAFPPQAAAAAGHQLATATDTSCESVVTSGHHHQQQQHNVVQPPPRDASPAGLMSIAEETLTEFLSKATGTAVEWLQMPGMKPGPDSIGIIAISHGCAGVAARACGLVGMEPAKVAEILKDRPLWLRDCRSMDVVNVLPAGANGTIELLYMQLYAPTTLAPARDFWLLRYTSILDDGSLVVCERSLSSKQGGPSMPLVQPFIRGEMLPSGFLIRPSDGGGSVIHIVDHMDLEPWSVPEVVRPLYESSAMVAQKISMAALRYLRQVAHEDTRSVITGWGRQPAALRALSQKLTRGFNEALNGLADDGWSVIESDGVDDVCISVNSSKVIGCNATFSSGLPIVSTGVLCAKASMLLQDVSPPSLLQFLREHRSQWADSNLDAFFASAMKPNFCNLPMSRLGGFSGQVILPLAHTFEPEEFLEVIKLGNASNYQDTLVHRDLFLLQMYNGVEESSAGTCSELIFAPIDASFSDDSPLLPSGFRIIPIDSPLDTSSPNCTLDLASTLEAATPRSRISGVNGGGGTCAAAAASSSSKAVMTIAFQFAFDGHLQDSVAAMARQYMRNIISSVQRIAVALSSSRLVPPGAAAAAAQLSPVTPEAATLPRWICQSYRFHFGAELIKSVDANSSNESILKAVWHHPSAILCCSLKAMPVFTFANQSGLDMLETTLVALQDMTLEKVFDDQGRKNLCTELPNIMEQGMACMEGGVCVSSVGRAASYEKAVAWKVVDGDGGGAHCISFMFINWTFL.

A DNA-binding region (homeobox) is located at residues 2–65 (DASKYVRYTP…NRRCREKQRK (64 aa)). Residues 57–99 (RRCREKQRKESSRLQALNRKLTAMNKLLMEENDRLQKQVSQLV) are a coiled coil. The START domain occupies 162–390 (RDASPAGLMS…VAHEDTRSVI (229 aa)).

It belongs to the HD-ZIP homeobox family. Class III subfamily. As to expression, expressed in roots, stems and leaf blades.

Its subcellular location is the nucleus. Functionally, probable transcription factor. The chain is Homeobox-leucine zipper protein HOX29 (HOX29) from Oryza sativa subsp. indica (Rice).